A 150-amino-acid chain; its full sequence is UPF0208 membrane protein VC_1099 (150 aa).

A run of 2 helical transmembrane segments spans residues 42–62 (FAIK…MVFA) and 70–90 (AIVV…WLGH).

Belongs to the UPF0208 family.

It localises to the cell inner membrane. The polypeptide is UPF0208 membrane protein VC_1099 (Vibrio cholerae serotype O1 (strain ATCC 39315 / El Tor Inaba N16961)).